The chain runs to 625 residues: MSAPTKPHARPQGAGNSVPNTVKPATQFPSKPAVAKLERVSPEQLTGAQSVIRSLEELDVEVIFGIPGGAVLLVYDPLFYSKKLRHVLVRHEQGAGHAASGYAHVTGKVGVCMATSGPGATNLVTPLADAQMDSVPVVAITGQVGRSLIGTDAFQEADISGITMPITKHNFLVRAGDDIPRVLAEAFHIASSGRPGAVLVDIPKDVLQGQCKFSWPPKMDLPGYKPNTKPHNRQIRAAAKLIADARKPVLYVGGGVIRGEATEQLRDLAELTGIPVVSTLMARGAFPDSHHQNLGMPGMHGTVAAVAALQRSDLLIALGTRFDDRVTGKLDSFAPDAKVIHADIDPAEIGKNRHADVPIVGDVKAVIVELIAMLRHYEVPGNIEMTDWWSYLDGVRKTYPLSYSPQSDGTLSPEYVIEKLGEIVGPEAVYVAGVGQHQMWAAQFISYEKPRTWLNSGGLGTMGFAIPAAMGAKIARPEAEVWAIDGDGCFQMTNQELATCAIEGAPIKVALINNGNLGMVRQWQALFYQERYSQTDLATHSHRIPDFVKLAEALGCVGLRCECEEDVVDVINQARAINNRPVVIDFIVGADAQVWPMVAAGASNDEIQAARGIRPLFDDESEGHV.

The tract at residues 1 to 29 (MSAPTKPHARPQGAGNSVPNTVKPATQFP) is disordered. The segment covering 14 to 29 (AGNSVPNTVKPATQFP) has biased composition (polar residues). Glu92 is a binding site for thiamine diphosphate. FAD contacts are provided by residues Arg194, 300–321 (HGTV…LGTR), and 343–362 (DIDP…IVGD). The interval 436-516 (QHQMWAAQFI…IKVALINNGN (81 aa)) is thiamine pyrophosphate binding. Positions 487 and 514 each coordinate Mg(2+).

This sequence belongs to the TPP enzyme family. The cofactor is Mg(2+). Thiamine diphosphate is required as a cofactor.

The enzyme catalyses 2 pyruvate + H(+) = (2S)-2-acetolactate + CO2. The protein operates within amino-acid biosynthesis; L-isoleucine biosynthesis; L-isoleucine from 2-oxobutanoate: step 1/4. It participates in amino-acid biosynthesis; L-valine biosynthesis; L-valine from pyruvate: step 1/4. In Mycobacterium leprae (strain TN), this protein is Acetolactate synthase (ilvB).